We begin with the raw amino-acid sequence, 422 residues long: Probable zinc-type alcohol dehydrogenase-like protein L498 (422 aa).

Zn(2+) is bound by residues Cys108, His129, Cys160, Cys163, Cys166, Cys174, and Cys231.

Zn(2+) serves as cofactor.

Its subcellular location is the host cytoplasm. The protein resides in the virion. The protein is Probable zinc-type alcohol dehydrogenase-like protein L498 of Acanthamoeba polyphaga (Amoeba).